A 607-amino-acid chain; its full sequence is Serum albumin (607 aa).

Residues 1 to 16 form the signal peptide; sequence MKWTILTALLIISAES. Positions 17 to 20 are excised as a propeptide; sequence KNLY. 3 Albumin domains span residues 19 to 209, 210 to 401, and 403 to 600; these read LYKR…TQLK, KALH…HVLA, and AIKE…ILIE. A Cu cation-binding site is contributed by H27. Disulfide bonds link C77–C86, C99–C115, C114–C125, C147–C192, C191–C200, C223–C269, C268–C276, C288–C302, C301–C312, C339–C384, C383–C392, C415–C461, C460–C471, C484–C500, C499–C510, C537–C582, and C581–C590. H270 and D272 together coordinate Zn(2+). The Ca(2+) site is built by D272 and E275.

The protein belongs to the ALB/AFP/VDB family. Plasma. In the skin, widely distributed around the membranes of epithelial layer cells and within the stratum spongiosum of the dermis (at protein level).

The protein resides in the secreted. Its function is as follows. Serum albumin, the main protein of plasma, has a good binding capacity for water, Ca(2+), Na(+), K(+), fatty acids, hormones, bilirubin and drugs. Its main function is the regulation of the colloidal osmotic pressure of blood. Potent inhibitor of trypsin but has no inhibitory effect on thrombin, chymotrypsin, elastase and subtilisin. In Bombina maxima (Giant fire-bellied toad), this protein is Serum albumin.